The primary structure comprises 199 residues: UPF0301 protein Rfer_1377 (199 aa).

Belongs to the UPF0301 (AlgH) family.

In Albidiferax ferrireducens (strain ATCC BAA-621 / DSM 15236 / T118) (Rhodoferax ferrireducens), this protein is UPF0301 protein Rfer_1377.